The following is a 106-amino-acid chain: Nucleoid-associated protein Fjoh_2555 (106 aa).

This sequence belongs to the YbaB/EbfC family. As to quaternary structure, homodimer.

Its subcellular location is the cytoplasm. The protein resides in the nucleoid. In terms of biological role, binds to DNA and alters its conformation. May be involved in regulation of gene expression, nucleoid organization and DNA protection. In Flavobacterium johnsoniae (strain ATCC 17061 / DSM 2064 / JCM 8514 / BCRC 14874 / CCUG 350202 / NBRC 14942 / NCIMB 11054 / UW101) (Cytophaga johnsonae), this protein is Nucleoid-associated protein Fjoh_2555.